The primary structure comprises 160 residues: Cyclic pyranopterin monophosphate synthase (160 aa).

Residues 76–78 and 114–115 each bind substrate; these read LCH and ME. The active site involves D129.

It belongs to the MoaC family. In terms of assembly, homohexamer; trimer of dimers.

The catalysed reaction is (8S)-3',8-cyclo-7,8-dihydroguanosine 5'-triphosphate = cyclic pyranopterin phosphate + diphosphate. It functions in the pathway cofactor biosynthesis; molybdopterin biosynthesis. Catalyzes the conversion of (8S)-3',8-cyclo-7,8-dihydroguanosine 5'-triphosphate to cyclic pyranopterin monophosphate (cPMP). The polypeptide is Cyclic pyranopterin monophosphate synthase (Vibrio cholerae serotype O1 (strain ATCC 39541 / Classical Ogawa 395 / O395)).